Reading from the N-terminus, the 463-residue chain is UDP-N-acetylmuramoylalanine--D-glutamate ligase (463 aa).

Residue 126 to 132 participates in ATP binding; it reads GSNGKST.

It belongs to the MurCDEF family.

It localises to the cytoplasm. The catalysed reaction is UDP-N-acetyl-alpha-D-muramoyl-L-alanine + D-glutamate + ATP = UDP-N-acetyl-alpha-D-muramoyl-L-alanyl-D-glutamate + ADP + phosphate + H(+). It functions in the pathway cell wall biogenesis; peptidoglycan biosynthesis. Cell wall formation. Catalyzes the addition of glutamate to the nucleotide precursor UDP-N-acetylmuramoyl-L-alanine (UMA). The chain is UDP-N-acetylmuramoylalanine--D-glutamate ligase from Idiomarina loihiensis (strain ATCC BAA-735 / DSM 15497 / L2-TR).